Here is a 201-residue protein sequence, read N- to C-terminus: 7-methyl-GTP pyrophosphatase (201 aa).

The active-site Proton acceptor is the Asp-73.

This sequence belongs to the Maf family. YceF subfamily. It depends on a divalent metal cation as a cofactor.

It localises to the cytoplasm. It carries out the reaction N(7)-methyl-GTP + H2O = N(7)-methyl-GMP + diphosphate + H(+). Functionally, nucleoside triphosphate pyrophosphatase that hydrolyzes 7-methyl-GTP (m(7)GTP). May have a dual role in cell division arrest and in preventing the incorporation of modified nucleotides into cellular nucleic acids. The protein is 7-methyl-GTP pyrophosphatase of Thiobacillus denitrificans (strain ATCC 25259 / T1).